The sequence spans 335 residues: Interleukin-12 subunit beta (335 aa).

The first 22 residues, 1-22 (MCPQKLTISWFAIVLLVSPLMA), serve as a signal peptide directing secretion. The Ig-like C2-type domain maps to 23–106 (MWELEKDVYV…LSHSHLLLHK (84 aa)). The N-linked (GlcNAc...) asparagine glycan is linked to Asn-47. Cys-50 and Cys-90 are joined by a disulfide. Residues Asn-122, Asn-132, and Asn-220 are each glycosylated (N-linked (GlcNAc...) asparagine). In terms of domain architecture, Fibronectin type-III spans 233–324 (PDPPKNLQMK…QDRYYNSSCS (92 aa)).

The protein belongs to the IL-12B family. Heterodimer with IL12A; disulfide-linked. The heterodimer is known as interleukin IL-12. Heterodimer with IL23A; disulfide-linked. The heterodimer is known as interleukin IL-23. Also secreted as a monomer. Interacts with NBR1; this interaction promotes IL-12 secretion.

Its subcellular location is the secreted. Functionally, cytokine that can act as a growth factor for activated T and NK cells, enhance the lytic activity of NK/lymphokine-activated killer cells, and stimulate the production of IFN-gamma by resting PBMC. Associates with IL23A to form the IL-23 interleukin, a heterodimeric cytokine which functions in innate and adaptive immunity. IL-23 may constitute with IL-17 an acute response to infection in peripheral tissues. IL-23 binds to a heterodimeric receptor complex composed of IL12RB1 and IL23R, activates the Jak-Stat signaling cascade, stimulates memory rather than naive T-cells and promotes production of pro-inflammatory cytokines. IL-23 induces autoimmune inflammation and thus may be responsible for autoimmune inflammatory diseases and may be important for tumorigenesis. The polypeptide is Interleukin-12 subunit beta (Il12b) (Mus musculus (Mouse)).